The sequence spans 355 residues: Probable dual-specificity RNA methyltransferase RlmN 1 (355 aa).

The active-site Proton acceptor is E91. In terms of domain architecture, Radical SAM core spans 99-336; sequence RADRAAGCLS…THLRRSRGPD (238 aa). The cysteines at positions 106 and 341 are disulfide-linked. C113, C117, and C120 together coordinate [4Fe-4S] cluster. S-adenosyl-L-methionine contacts are provided by residues 163 to 164, S195, 218 to 220, and N294; these read GE and SLH. C341 functions as the S-methylcysteine intermediate in the catalytic mechanism.

Belongs to the radical SAM superfamily. RlmN family. The cofactor is [4Fe-4S] cluster.

Its subcellular location is the cytoplasm. The enzyme catalyses adenosine(2503) in 23S rRNA + 2 reduced [2Fe-2S]-[ferredoxin] + 2 S-adenosyl-L-methionine = 2-methyladenosine(2503) in 23S rRNA + 5'-deoxyadenosine + L-methionine + 2 oxidized [2Fe-2S]-[ferredoxin] + S-adenosyl-L-homocysteine. It catalyses the reaction adenosine(37) in tRNA + 2 reduced [2Fe-2S]-[ferredoxin] + 2 S-adenosyl-L-methionine = 2-methyladenosine(37) in tRNA + 5'-deoxyadenosine + L-methionine + 2 oxidized [2Fe-2S]-[ferredoxin] + S-adenosyl-L-homocysteine. Functionally, specifically methylates position 2 of adenine 2503 in 23S rRNA and position 2 of adenine 37 in tRNAs. The sequence is that of Probable dual-specificity RNA methyltransferase RlmN 1 from Opitutus terrae (strain DSM 11246 / JCM 15787 / PB90-1).